We begin with the raw amino-acid sequence, 289 residues long: Phosphatidylserine decarboxylase proenzyme (289 aa).

Active-site charge relay system; for autoendoproteolytic cleavage activity residues include Asp92, His149, and Ser254. Catalysis depends on Ser254, which acts as the Schiff-base intermediate with substrate; via pyruvic acid; for decarboxylase activity. A Pyruvic acid (Ser); by autocatalysis modification is found at Ser254.

It belongs to the phosphatidylserine decarboxylase family. PSD-B subfamily. Prokaryotic type I sub-subfamily. As to quaternary structure, heterodimer of a large membrane-associated beta subunit and a small pyruvoyl-containing alpha subunit. Pyruvate serves as cofactor. In terms of processing, is synthesized initially as an inactive proenzyme. Formation of the active enzyme involves a self-maturation process in which the active site pyruvoyl group is generated from an internal serine residue via an autocatalytic post-translational modification. Two non-identical subunits are generated from the proenzyme in this reaction, and the pyruvate is formed at the N-terminus of the alpha chain, which is derived from the carboxyl end of the proenzyme. The autoendoproteolytic cleavage occurs by a canonical serine protease mechanism, in which the side chain hydroxyl group of the serine supplies its oxygen atom to form the C-terminus of the beta chain, while the remainder of the serine residue undergoes an oxidative deamination to produce ammonia and the pyruvoyl prosthetic group on the alpha chain. During this reaction, the Ser that is part of the protease active site of the proenzyme becomes the pyruvoyl prosthetic group, which constitutes an essential element of the active site of the mature decarboxylase.

It is found in the cell membrane. It catalyses the reaction a 1,2-diacyl-sn-glycero-3-phospho-L-serine + H(+) = a 1,2-diacyl-sn-glycero-3-phosphoethanolamine + CO2. The protein operates within phospholipid metabolism; phosphatidylethanolamine biosynthesis; phosphatidylethanolamine from CDP-diacylglycerol: step 2/2. In terms of biological role, catalyzes the formation of phosphatidylethanolamine (PtdEtn) from phosphatidylserine (PtdSer). This is Phosphatidylserine decarboxylase proenzyme from Pseudomonas aeruginosa (strain LESB58).